We begin with the raw amino-acid sequence, 415 residues long: Serine hydroxymethyltransferase (415 aa).

(6S)-5,6,7,8-tetrahydrofolate contacts are provided by residues L122 and 126–128 (GHL). Residue K230 is modified to N6-(pyridoxal phosphate)lysine.

It belongs to the SHMT family. Homodimer. Pyridoxal 5'-phosphate is required as a cofactor.

It localises to the cytoplasm. It carries out the reaction (6R)-5,10-methylene-5,6,7,8-tetrahydrofolate + glycine + H2O = (6S)-5,6,7,8-tetrahydrofolate + L-serine. It functions in the pathway one-carbon metabolism; tetrahydrofolate interconversion. It participates in amino-acid biosynthesis; glycine biosynthesis; glycine from L-serine: step 1/1. In terms of biological role, catalyzes the reversible interconversion of serine and glycine with tetrahydrofolate (THF) serving as the one-carbon carrier. This reaction serves as the major source of one-carbon groups required for the biosynthesis of purines, thymidylate, methionine, and other important biomolecules. Also exhibits THF-independent aldolase activity toward beta-hydroxyamino acids, producing glycine and aldehydes, via a retro-aldol mechanism. This chain is Serine hydroxymethyltransferase, found in Cupriavidus necator (strain ATCC 17699 / DSM 428 / KCTC 22496 / NCIMB 10442 / H16 / Stanier 337) (Ralstonia eutropha).